A 216-amino-acid chain; its full sequence is Uracil phosphoribosyltransferase (216 aa).

Residues R85, R110, and 135–143 (DPMVATGYS) each bind 5-phospho-alpha-D-ribose 1-diphosphate. Residues I200 and 205 to 207 (GDA) contribute to the uracil site. D206 is a 5-phospho-alpha-D-ribose 1-diphosphate binding site.

It belongs to the UPRTase family. It depends on Mg(2+) as a cofactor.

The catalysed reaction is UMP + diphosphate = 5-phospho-alpha-D-ribose 1-diphosphate + uracil. It functions in the pathway pyrimidine metabolism; UMP biosynthesis via salvage pathway; UMP from uracil: step 1/1. With respect to regulation, allosterically activated by GTP. Functionally, catalyzes the conversion of uracil and 5-phospho-alpha-D-ribose 1-diphosphate (PRPP) to UMP and diphosphate. In Burkholderia multivorans (strain ATCC 17616 / 249), this protein is Uracil phosphoribosyltransferase.